The following is a 175-amino-acid chain: Cytochrome c homolog (175 aa).

Over 1 to 8 the chain is Cytoplasmic; sequence MTGKELNK. A helical; Signal-anchor transmembrane segment spans residues 9 to 29; the sequence is IVAAILFASLIAMIVGFIANI. Residues 30-175 are Periplasmic-facing; the sequence is LYKPNLHVLH…LFLKNYVHDQ (146 aa). Residues cysteine 84, cysteine 87, histidine 88, and methionine 150 each coordinate heme c.

Belongs to the cytochrome c family. Binds 1 heme c group covalently per subunit.

The protein resides in the cell membrane. Its function is as follows. May be involved in electron transfer from bc1 complex to aa3. The sequence is that of Cytochrome c homolog (cycM) from Rickettsia prowazekii (strain Madrid E).